The following is a 154-amino-acid chain: Large ribosomal subunit protein uL22 (154 aa).

It belongs to the universal ribosomal protein uL22 family. Part of the 50S ribosomal subunit.

Its function is as follows. This protein binds specifically to 23S rRNA. It makes multiple contacts with different domains of the 23S rRNA in the assembled 50S subunit and ribosome. In terms of biological role, the globular domain of the protein is located near the polypeptide exit tunnel on the outside of the subunit, while an extended beta-hairpin is found that lines the wall of the exit tunnel in the center of the 70S ribosome. The polypeptide is Large ribosomal subunit protein uL22 (Methanoregula boonei (strain DSM 21154 / JCM 14090 / 6A8)).